Reading from the N-terminus, the 430-residue chain is MEF2-activating motif and SAP domain-containing transcriptional regulator (430 aa).

Residues 12-28 carry the MEF2-binding motif; the sequence is IIRSKFRSVLQLRIHRR. Disordered regions lie at residues 84–172, 204–239, 280–301, and 330–416; these read CWSL…PLPH, KSML…RFRP, VATT…APAS, and EDQV…DLSD. Over residues 87–103 the composition is skewed to basic and acidic residues; the sequence is LKKESPKTSQHWREPKP. Pro residues predominate over residues 147-170; the sequence is QPPPRMKPTPLTPSPPGVPSPSPL. In terms of domain architecture, SAP spans 181 to 215; it reads LEELTVSELRQQLRLRGLPVSGTKSMLLERMRGGA. Residues 207–228 are compositionally biased toward basic and acidic residues; it reads LLERMRGGAPPRERPKARREDS. Residues 224 to 430 form a transcription activation region; sequence RREDSAAGAP…RLWDLLEDPW (207 aa). 2 stretches are compositionally biased toward low complexity: residues 363-373 and 393-403; these read SSVFSSSLPSP and ALSGGPSLGCG.

As to quaternary structure, interacts with MEF2C.

The protein resides in the nucleus. In terms of biological role, transcriptional coactivator. Stimulates the transcriptional activity of MEF2C. Stimulates MYOD1 activity in part via MEF2, resulting in an enhancement of skeletal muscle differentiation. This chain is MEF2-activating motif and SAP domain-containing transcriptional regulator (MAMSTR), found in Bos taurus (Bovine).